We begin with the raw amino-acid sequence, 682 residues long: Solute carrier organic anion transporter family member 2B1 (682 aa).

Positions 1-30 (MPDRSTKATMGAEDIHERKVSMEPRDSHQD) are disordered. Residues 1 to 41 (MPDRSTKATMGAEDIHERKVSMEPRDSHQDAQPRGMFQNIK) are Cytoplasmic-facing. A compositionally biased stretch (basic and acidic residues) spans 13 to 30 (EDIHERKVSMEPRDSHQD). Ser21 bears the Phosphoserine mark. A helical transmembrane segment spans residues 42–61 (FFVLCHSILQLAQLMISGYL). Residues 62-80 (KSSISTVEKRFGLSSQTSG) are Extracellular-facing. Residues 81–101 (LLAAFNEVGNISLILFVSYFG) form a helical membrane-spanning segment. Residues 102-107 (SRVHRP) are Cytoplasmic-facing. Residues 108–132 (RMIGCGAILVAVAGLLMALPHFISE) traverse the membrane as a helical segment. Residues 133 to 176 (PYRYDHSSPDRSQDFEASLCLPTTMAPASALSNDSCSSRTETKH) lie on the Extracellular side of the membrane. Residue Asn165 is glycosylated (N-linked (GlcNAc...) asparagine). The chain crosses the membrane as a helical span at residues 177-206 (LTMVGIMFTAQTLLGIGGVPIQPFGISYID). The Cytoplasmic segment spans residues 207–225 (DFAHHSNSPLYLGILFAIT). The chain crosses the membrane as a helical span at residues 226-246 (MMGPGLAYGLGSLMLRLYVDI). Residues 247-264 (DRMPEGGINLTTKDPRWV) are Extracellular-facing. N-linked (GlcNAc...) asparagine glycosylation occurs at Asn255. The chain crosses the membrane as a helical span at residues 265-289 (GAWWLGFLISAGLVVLAASPYFFFP). The Cytoplasmic segment spans residues 290-354 (REMPKEKYEL…IKVFPRVLLR (65 aa)). Ser311 and Ser314 each carry phosphoserine. The chain crosses the membrane as a helical span at residues 355–376 (TLRHPIFLLVVLSQVCTSSMVA). The Extracellular portion of the chain corresponds to 377 to 396 (GTATFLPKFLERQFSITASF). Residues 397–420 (ANLLLGCLTIPLAIVGIVVGGVLV) traverse the membrane as a helical segment. Over 421 to 424 (KRLH) the chain is Cytoplasmic. The helical transmembrane segment at 425 to 448 (LSPMQCSALCLLGSLLCLLLSLPL) threads the bilayer. Over 449–552 (FFIGCSTHHI…SACSRLVLPF (104 aa)) the chain is Extracellular. In terms of domain architecture, Kazal-like spans 471–531 (PSLFPGCSEP…VFYTNCSCVA (61 aa)). 3 disulfide bridges follow: Cys477/Cys508, Cys483/Cys504, and Cys492/Cys529. N-linked (GlcNAc...) asparagine glycans are attached at residues Asn526 and Asn533. Residues 553–575 (ILLISLGAAVASITHTPSFMLIL) form a helical membrane-spanning segment. Topologically, residues 576 to 584 (RGVKKEDKT) are cytoplasmic. A helical transmembrane segment spans residues 585–610 (LAVGMQFMLLRVLAWMPSPVIHGSAI). The Extracellular segment spans residues 611–643 (DTTCVHWALTCGRRAVCRYYDHDLLRNRFIGLQ). Residues 644–661 (FFFKSGSLVCFALVLAIL) form a helical membrane-spanning segment. Residues 662–682 (RQQSREASTKATVKSSDLQEL) lie on the Cytoplasmic side of the membrane.

This sequence belongs to the organo anion transporter (TC 2.A.60) family. In terms of tissue distribution, expressed in liver, kidney, heart, lung and retina. Widely distributed in all brain regions.

It localises to the cell membrane. The protein localises to the basal cell membrane. The protein resides in the apical cell membrane. The enzyme catalyses coproporphyrin III(out) = coproporphyrin III(in). It catalyses the reaction substance P(out) = substance P(in). It carries out the reaction taurocholate(out) = taurocholate(in). The catalysed reaction is prostaglandin E1(out) = prostaglandin E1(in). The enzyme catalyses prostaglandin E2(out) = prostaglandin E2(in). It catalyses the reaction prostaglandin D2(out) = prostaglandin D2(in). It carries out the reaction leukotriene C4(out) = leukotriene C4(in). The catalysed reaction is L-thyroxine(out) = L-thyroxine(in). Its function is as follows. Mediates the Na(+)-independent transport of organic anions such as taurocholate, the prostaglandins D2 (PGD2), E1 (PGE1) and E2 (PGE2), leukotriene C4, thromboxane B2 and L-thyroxine. Also plays a role in the reuptake of neuropeptides such as substance P/TAC1 and vasoactive intestinal peptide/VIP released from retinal neurons. May act as a heme transporter that promotes cellular iron availability. Also transports heme by-product coproporphyrin III (CPIII), and may be involved in their hepatic disposition. May contribute to regulate the transport of organic compounds in testis across the blood-testis-barrier. Shows a pH-sensitive substrate specificity which may be ascribed to the protonation state of the binding site and leads to a stimulation of substrate transport in an acidic microenvironment. The exact transport mechanism has not been yet deciphered but most likely involves an anion exchange, coupling the cellular uptake of organic substrate with the efflux of an anionic compound. Hydrogencarbonate/HCO3(-) acts as a probable counteranion that exchanges for organic anions. Cytoplasmic glutamate may also act as counteranion in the placenta. This Rattus norvegicus (Rat) protein is Solute carrier organic anion transporter family member 2B1.